Consider the following 491-residue polypeptide: Leucine aminopeptidase 1 (491 aa).

2 residues coordinate Zn(2+): Lys-252 and Asp-257. Lys-264 is a catalytic residue. Zn(2+) contacts are provided by Asp-275, Asp-334, and Glu-336. Arg-338 is an active-site residue.

The protein belongs to the peptidase M17 family. The cofactor is Zn(2+). Expressed in the buccal cavity, pharynx, anterior gut and rectum.

It carries out the reaction Release of an N-terminal amino acid, Xaa-|-Yaa-, in which Xaa is preferably Leu, but may be other amino acids including Pro although not Arg or Lys, and Yaa may be Pro. Amino acid amides and methyl esters are also readily hydrolyzed, but rates on arylamides are exceedingly low.. Probably acts as a digestive enzyme. In Caenorhabditis elegans, this protein is Leucine aminopeptidase 1 (lap-1).